A 273-amino-acid polypeptide reads, in one-letter code: 4-hydroxy-tetrahydrodipicolinate reductase (273 aa).

NAD(+) contacts are provided by residues 12 to 17 (GAGGRM) and E38. R39 serves as a coordination point for NADP(+). NAD(+)-binding positions include 102–104 (GTT) and 126–129 (AANF). The active-site Proton donor/acceptor is the H159. H160 contributes to the (S)-2,3,4,5-tetrahydrodipicolinate binding site. K163 functions as the Proton donor in the catalytic mechanism. 169 to 170 (GT) serves as a coordination point for (S)-2,3,4,5-tetrahydrodipicolinate.

This sequence belongs to the DapB family. In terms of assembly, homotetramer.

It localises to the cytoplasm. It catalyses the reaction (S)-2,3,4,5-tetrahydrodipicolinate + NAD(+) + H2O = (2S,4S)-4-hydroxy-2,3,4,5-tetrahydrodipicolinate + NADH + H(+). The enzyme catalyses (S)-2,3,4,5-tetrahydrodipicolinate + NADP(+) + H2O = (2S,4S)-4-hydroxy-2,3,4,5-tetrahydrodipicolinate + NADPH + H(+). Its pathway is amino-acid biosynthesis; L-lysine biosynthesis via DAP pathway; (S)-tetrahydrodipicolinate from L-aspartate: step 4/4. Functionally, catalyzes the conversion of 4-hydroxy-tetrahydrodipicolinate (HTPA) to tetrahydrodipicolinate. The chain is 4-hydroxy-tetrahydrodipicolinate reductase from Salmonella gallinarum (strain 287/91 / NCTC 13346).